The following is a 185-amino-acid chain: MKRNVLLLPLLIFLLIAAALLWQLARNAQGDDPTNLESALTGKPVPAFRLESLETPGQYYQAEVLTQGKPVLLNVWATWCPTCRAEHQYLNRLAAQGIRVVGLNYKDDRAKAVAWLKELGNPYALSLSDSDGMLGLDLGVYGAPETFLIDGRGIIRYRHAGDLNARVWESELKPLWDRYSREAAQ.

Residues 1–4 lie on the Cytoplasmic side of the membrane; sequence MKRN. A helical membrane pass occupies residues 5 to 25; it reads VLLLPLLIFLLIAAALLWQLA. Topologically, residues 26-185 are periplasmic; it reads RNAQGDDPTN…WDRYSREAAQ (160 aa). Residues 39 to 177 form the Thioredoxin domain; that stretch reads ALTGKPVPAF…WESELKPLWD (139 aa). Residues Cys-80 and Cys-83 are joined by a disulfide bond.

This sequence belongs to the thioredoxin family. DsbE subfamily.

It is found in the cell inner membrane. In terms of biological role, involved in disulfide bond formation. Catalyzes a late, reductive step in the assembly of periplasmic c-type cytochromes, probably the reduction of disulfide bonds of the apocytochrome c to allow covalent linkage with the heme. Possible subunit of a heme lyase. The sequence is that of Thiol:disulfide interchange protein DsbE (dsbE1) from Salmonella typhi.